The primary structure comprises 843 residues: Histone-lysine N-methyltransferase PRDM9 (843 aa).

The KRAB-related domain occupies Lys-23–Asn-86. 2 disordered regions span residues Ile-85 to Pro-104 and Val-110 to Lys-170. Residues Cys-205, Cys-208, Cys-216, and His-219 each contribute to the Zn(2+) site. Positions Pro-244 to Gly-358 constitute an SET domain. S-adenosyl-L-methionine-binding positions include Ala-256 to Leu-258, Tyr-291, and Asn-320 to Cys-321. Asn-288 to Leu-294 is a binding site for substrate. Tyr-357 contributes to the substrate binding site. Lys-368 carries the post-translational modification N6,N6,N6-trimethyllysine; alternate. An N6-methyllysine; alternate modification is found at Lys-368. An N6-methyllysine mark is found at Lys-372 and Lys-374. A C2H2-type 1 zinc finger spans residues His-388–His-411. Zn(2+) contacts are provided by Cys-390, Cys-393, His-406, and His-411. The segment at Gly-418–Thr-493 is disordered. Over residues Gln-436–Lys-454 the composition is skewed to basic and acidic residues. A compositionally biased stretch (polar residues) spans Arg-462–Lys-472. Residues Glu-473–Arg-488 show a composition bias toward basic and acidic residues. The segment at Gln-513 to His-531 adopts a C2H2-type 2; degenerate zinc-finger fold. 11 consecutive C2H2-type zinc fingers follow at residues Tyr-537–His-559, Tyr-565–His-587, Tyr-593–His-615, Tyr-621–His-643, Tyr-649–His-671, Tyr-677–His-699, Tyr-705–His-727, Tyr-733–His-755, Tyr-761–His-783, Tyr-789–His-811, and Tyr-817–His-839. Residues Cys-707, Cys-710, His-723, His-727, Cys-735, Cys-738, His-751, His-755, Cys-763, Cys-766, His-779, His-783, Cys-791, Cys-794, His-807, and His-811 each contribute to the Zn(2+) site. The interval Thr-715 to Ile-805 is DNA-binding.

The protein belongs to the class V-like SAM-binding methyltransferase superfamily. In terms of assembly, homodimer. Interacts with EHMT2 and CDYL; interaction only takes place when PRDM9 is bound to hotspot DNA. Interacts with CXXC1; this interaction does not link PRDM9-activated recombination hotspot sites with DSB machinery and is not required for the hotspot recognition pathway. Forms a complex with EWSR1, REC8, SYCP3 and SYCP1; complex formation is dependent of phosphorylated form of REC8 and requires PRDM9 bound to hotspot DNA; EWSR1 joins PRDM9 with the chromosomal axis through REC8. In terms of processing, mono-methylated; automethylated. Tri-methylated; automethylated. Mono-methylation is predominant; automethylation is lower and slower than H3 peptide methylation and is in a highest S-adenosyl-L-methionine concentration-dependent. There are two major sites for automethylation at Lys-368 and Lys-374. Lysines can be simultaneously methylated, such as Lys-368(me3)/Lys-372(me1), Lys-368(me1)/Lys-374(me1) and Lys-368(me1)/Lys-372(me1)/Lys-374(me1). Automethylation is an intramolecular (cis) process. In terms of tissue distribution, specifically expressed in germ cells entering meiotic prophase in female fetal gonads and in postnatal testis. Expressed in early meiotic prophase.

It localises to the nucleus. The protein resides in the chromosome. The catalysed reaction is L-lysyl-[protein] + S-adenosyl-L-methionine = N(6)-methyl-L-lysyl-[protein] + S-adenosyl-L-homocysteine + H(+). It catalyses the reaction N(6),N(6)-dimethyl-L-lysyl-[protein] + S-adenosyl-L-methionine = N(6),N(6),N(6)-trimethyl-L-lysyl-[protein] + S-adenosyl-L-homocysteine + H(+). The enzyme catalyses L-lysyl(4)-[histone H3] + 3 S-adenosyl-L-methionine = N(6),N(6),N(6)-trimethyl-L-lysyl(4)-[histone H3] + 3 S-adenosyl-L-homocysteine + 3 H(+). It carries out the reaction L-lysyl(36)-[histone H3] + 3 S-adenosyl-L-methionine = N(6),N(6),N(6)-trimethyl-L-lysyl(36)-[histone H3] + 3 S-adenosyl-L-homocysteine + 3 H(+). The catalysed reaction is L-lysyl(9)-[histone H3] + 3 S-adenosyl-L-methionine = N(6),N(6),N(6)-trimethyl-L-lysyl(9)-[histone H3] + 3 S-adenosyl-L-homocysteine + 3 H(+). It catalyses the reaction L-lysyl(20)-[histone H4] + S-adenosyl-L-methionine = N(6)-methyl-L-lysyl(20)-[histone H4] + S-adenosyl-L-homocysteine + H(+). The enzyme catalyses N(6)-methyl-L-lysyl(20)-[histone H4] + S-adenosyl-L-methionine = N(6),N(6)-dimethyl-L-lysyl(20)-[histone H4] + S-adenosyl-L-homocysteine + H(+). Functionally, histone methyltransferase that sequentially mono-, di-, and tri-methylates both 'Lys-4' (H3K4) and 'Lys-36' (H3K36) of histone H3 to produce respectively trimethylated 'Lys-4' (H3K4me3) and trimethylated 'Lys-36' (H3K36me3) histone H3 and plays a key role in meiotic prophase by determining hotspot localization thereby promoting meiotic recombination. Can also methylate all four core histones with H3 being the best substrate and the most highly modified. Is also able, on one hand, to mono and di-methylate H4K20 and on other hand to trimethylate H3K9 with the di-methylated H3K9 as the best substrate. During meiotic prophase, binds specific DNA sequences through its zinc finger domains thereby determining hotspot localization where it promotes local H3K4me3 and H3K36me3 enrichment on the same nucleosomes through its histone methyltransferase activity. Thereby promotes double-stranded breaks (DSB) formation, at this subset of PRDM9-binding sites, that initiates meiotic recombination for the proper meiotic progression. During meiotic progression hotspot-bound PRDM9 interacts with several complexes; in early leptonema binds CDYL and EHMT2 followed by EWSR1 and CXXC1 by the end of leptonema. EWSR1 joins PRDM9 with the chromosomal axis through REC8. In this way, controls the DSB repair pathway, pairing of homologous chromosomes and sex body formation. Moreover plays a central role in the transcriptional activation of genes during early meiotic prophase thanks to H3K4me3 and H3K36me3 enrichment that represents a specific tag for epigenetic transcriptional activation. In addition performs automethylation. Acetylation and phosphorylation of histone H3 attenuate or prevent histone H3 methylation. In Mus musculus (Mouse), this protein is Histone-lysine N-methyltransferase PRDM9.